Here is a 133-residue protein sequence, read N- to C-terminus: MKTFPVSIVTPDGPVYEKEVEMVSVKAESGEMGILPGHIPTVAPLKISAVRLKNGGHTDYVAVSGGFIEVRPDKVTVLSSSAEEANHIDIHRANEAKRRAEQRMQDKQAHVDFKRAEMALQRAVNRLNVSDMK.

The protein belongs to the ATPase epsilon chain family. In terms of assembly, F-type ATPases have 2 components, CF(1) - the catalytic core - and CF(0) - the membrane proton channel. CF(1) has five subunits: alpha(3), beta(3), gamma(1), delta(1), epsilon(1). CF(0) has three main subunits: a, b and c.

It localises to the cell membrane. Functionally, produces ATP from ADP in the presence of a proton gradient across the membrane. This is ATP synthase epsilon chain from Bacillus anthracis (strain A0248).